The chain runs to 542 residues: Retron Ec83 probable ATPase (542 aa).

An ATP-binding motif is present at residues 92 to 99; that stretch reads GNNGCGKS.

In terms of biological role, probable ATPase component of antiviral defense system retron Ec83, composed of a non-coding RNA (ncRNA), a reverse transcriptase (RT), this protein and a putative HNH endonuclease. Expression of retron Ec83 confers protection against bacteriophage T2, T4 and T6. At multiplicity of infection (MOI) of 0.02 cultures slow growth when infected with T4 but do not collapse, at MOI 2 cultures enter growth stasis. The polypeptide is Retron Ec83 probable ATPase (Escherichia coli).